Here is a 479-residue protein sequence, read N- to C-terminus: Probable periplasmic serine endoprotease DegP-like (479 aa).

Positions 1–27 (MSIPRLKSYLSMFAAVLMLGQVLSAQA) are cleaved as a signal peptide. Catalysis depends on charge relay system residues H117, D147, and S220. Substrate is bound by residues 218–220 (GNS) and 275–279 (LGVVI). PDZ domains lie at 264 to 355 (LKKD…IRNG) and 361 to 468 (DVTI…LRQG). Positions 368-395 (PDDDADIGTGTGADGSAERSSNRLGVSV) are disordered.

It belongs to the peptidase S1C family.

The protein localises to the periplasm. It carries out the reaction Acts on substrates that are at least partially unfolded. The cleavage site P1 residue is normally between a pair of hydrophobic residues, such as Val-|-Val.. Its function is as follows. Might be efficient in the degradation of transiently denatured and unfolded proteins which accumulate in the periplasm following stress conditions. In Pseudomonas putida (strain W619), this protein is Probable periplasmic serine endoprotease DegP-like.